A 326-amino-acid polypeptide reads, in one-letter code: Eukaryotic translation initiation factor 3 subunit I (326 aa).

5 WD repeats span residues 8-47 (GHERSITQIKYNREGDLLFSCSKDQKPNVWYSLNGERLGT), 50-89 (GHQGAVWCLDVDWESRKLITGAGDMTTKLWDVEYGTIIAS), 145-184 (MTESKITSMQWGPLDETIITGHDNGNIAIWDVRKGQKVVD), 188-227 (DHAAGINDMQLSKDGTMFVTASRDTTAKLFDSESLMCLKT), and 285-326 (GHFG…NIFE).

Belongs to the eIF-3 subunit I family. In terms of assembly, component of the eukaryotic translation initiation factor 3 (eIF-3) complex. The eIF-3 complex interacts with pix.

It is found in the cytoplasm. Its function is as follows. Component of the eukaryotic translation initiation factor 3 (eIF-3) complex, which is involved in protein synthesis of a specialized repertoire of mRNAs and, together with other initiation factors, stimulates binding of mRNA and methionyl-tRNAi to the 40S ribosome. The eIF-3 complex specifically targets and initiates translation of a subset of mRNAs involved in cell proliferation. The sequence is that of Eukaryotic translation initiation factor 3 subunit I from Drosophila pseudoobscura pseudoobscura (Fruit fly).